Here is a 147-residue protein sequence, read N- to C-terminus: Protein YjdN (147 aa).

The polypeptide is Protein YjdN (yjdN) (Escherichia coli (strain K12)).